A 303-amino-acid polypeptide reads, in one-letter code: Glutaminase (303 aa).

Residues serine 61, asparagine 111, glutamate 155, asparagine 162, tyrosine 186, tyrosine 238, and valine 256 each coordinate substrate.

It belongs to the glutaminase family. In terms of assembly, homotetramer.

It carries out the reaction L-glutamine + H2O = L-glutamate + NH4(+). The chain is Glutaminase from Marinomonas sp. (strain MWYL1).